Reading from the N-terminus, the 154-residue chain is SsrA-binding protein (154 aa).

Belongs to the SmpB family.

The protein resides in the cytoplasm. Functionally, required for rescue of stalled ribosomes mediated by trans-translation. Binds to transfer-messenger RNA (tmRNA), required for stable association of tmRNA with ribosomes. tmRNA and SmpB together mimic tRNA shape, replacing the anticodon stem-loop with SmpB. tmRNA is encoded by the ssrA gene; the 2 termini fold to resemble tRNA(Ala) and it encodes a 'tag peptide', a short internal open reading frame. During trans-translation Ala-aminoacylated tmRNA acts like a tRNA, entering the A-site of stalled ribosomes, displacing the stalled mRNA. The ribosome then switches to translate the ORF on the tmRNA; the nascent peptide is terminated with the 'tag peptide' encoded by the tmRNA and targeted for degradation. The ribosome is freed to recommence translation, which seems to be the essential function of trans-translation. The polypeptide is SsrA-binding protein (Ruminiclostridium cellulolyticum (strain ATCC 35319 / DSM 5812 / JCM 6584 / H10) (Clostridium cellulolyticum)).